The chain runs to 218 residues: Thiopurine S-methyltransferase (218 aa).

S-adenosyl-L-methionine contacts are provided by tryptophan 10, leucine 45, glutamate 66, and arginine 123.

It belongs to the class I-like SAM-binding methyltransferase superfamily. TPMT family.

The protein localises to the cytoplasm. The enzyme catalyses S-adenosyl-L-methionine + a thiopurine = S-adenosyl-L-homocysteine + a thiopurine S-methylether.. The polypeptide is Thiopurine S-methyltransferase (Shewanella amazonensis (strain ATCC BAA-1098 / SB2B)).